Here is a 691-residue protein sequence, read N- to C-terminus: Alpha-1,4-glucan:maltose-1-phosphate maltosyltransferase (691 aa).

Positions 280, 341, and 376 each coordinate alpha-maltose 1-phosphate. D411 functions as the Nucleophile in the catalytic mechanism. N412 contacts alpha-maltose 1-phosphate. E440 serves as the catalytic Proton donor. Residue 550–551 (KY) coordinates alpha-maltose 1-phosphate.

It belongs to the glycosyl hydrolase 13 family. GlgE subfamily. As to quaternary structure, homodimer.

It catalyses the reaction alpha-maltose 1-phosphate + [(1-&gt;4)-alpha-D-glucosyl](n) = [(1-&gt;4)-alpha-D-glucosyl](n+2) + phosphate. Functionally, maltosyltransferase that uses maltose 1-phosphate (M1P) as the sugar donor to elongate linear or branched alpha-(1-&gt;4)-glucans. Is involved in a branched alpha-glucan biosynthetic pathway from trehalose, together with TreS, Mak and GlgB. The polypeptide is Alpha-1,4-glucan:maltose-1-phosphate maltosyltransferase (Arcanobacterium haemolyticum (strain ATCC 9345 / DSM 20595 / CCM 5947 / CCUG 17215 / LMG 16163 / NBRC 15585 / NCTC 8452 / 11018)).